We begin with the raw amino-acid sequence, 35 residues long: Neurotoxin (35 aa).

3 disulfide bridges follow: Cys7–Cys27, Cys14–Cys32, and Cys18–Cys34.

Expressed by the venom gland.

Its subcellular location is the secreted. Its function is as follows. Neurotoxin. Decreases the action potential of myelinated nerves in mice and frogs. This chain is Neurotoxin, found in Buthus sp. (strain IY-2001) (Scorpion).